A 222-amino-acid chain; its full sequence is Protein GrpE (222 aa).

Positions 1–82 (MSDFNKDEYL…KADDTLTPLG (82 aa)) are disordered. Over residues 20-71 (SGQAAPAAASADSAAAAAGATQEGAAQPAAAQSQENGDSAAADGADKAGAAD) the composition is skewed to low complexity.

It belongs to the GrpE family. As to quaternary structure, homodimer.

The protein resides in the cytoplasm. Participates actively in the response to hyperosmotic and heat shock by preventing the aggregation of stress-denatured proteins, in association with DnaK and GrpE. It is the nucleotide exchange factor for DnaK and may function as a thermosensor. Unfolded proteins bind initially to DnaJ; upon interaction with the DnaJ-bound protein, DnaK hydrolyzes its bound ATP, resulting in the formation of a stable complex. GrpE releases ADP from DnaK; ATP binding to DnaK triggers the release of the substrate protein, thus completing the reaction cycle. Several rounds of ATP-dependent interactions between DnaJ, DnaK and GrpE are required for fully efficient folding. The polypeptide is Protein GrpE (Bifidobacterium adolescentis (strain ATCC 15703 / DSM 20083 / NCTC 11814 / E194a)).